A 714-amino-acid chain; its full sequence is T-cell activation Rho GTPase-activating protein (714 aa).

One can recognise a Rho-GAP domain in the interval 88–277 (QPLSIICGEN…FLIDNCFEIF (190 aa)). Disordered regions lie at residues 290–357 (DDSL…ESSV), 370–419 (QDRR…AEDP), 451–508 (QGHI…HSMS), 520–563 (RTSS…QSQT), and 623–650 (KPST…HRLS). Residues 299-311 (SDVSTLQNDSAYD) are compositionally biased toward polar residues. At Ser398 the chain carries Phosphoserine. Over residues 459-471 (SRSSPGESLGSSP) the composition is skewed to low complexity. 2 stretches are compositionally biased toward basic and acidic residues: residues 492–501 (KTDKTKPQRE) and 527–545 (EKSK…RKES).

Highly expressed in testis.

In terms of biological role, may function as a GTPase-activating protein. May play a role in transmission ratio distortion (TRD) in mouse, in which heterozygous males for t-locus transmit their t-carrying chromosome to 95% or more of their offspring. In Mus musculus (Mouse), this protein is T-cell activation Rho GTPase-activating protein (Tagap).